Reading from the N-terminus, the 617-residue chain is MALLQIAEPGQTAAPHQHRLAVGIDLGTTNSLVASVRSGQTQVLLDDQERALVPSVVHYGEQQKTVGIEAFAQASLDPQNTVISAKRLIGRSLADVQTRYPDLPYQFIASDNGLPLIQTKQGNKSPVEVSADILSHLNRFAEQRLGGELSGVVITVPAYFDDAQRQSTKDAARLAGLNVLRLLNEPTAAAIAYGLDSGQEGVIAVYDLGGGTFDISILRLSRGVFEVLATGGDTALGGDDFDHLLADWIAQQANYQPQNANEQRELLTLATQTKVALSQAVETEVKFANWQGTVSREQFNELIQLLVKRSLMTCRRALKDAGVEGEEIREVVMVGGSTRVPFVREQVGEFFGKQPLTSIDPDKVVALGAAIQADILVGNKPDSEMLLLDVVPLSLGIETMGGLVEKIIPRNMTIPVARAQEFTTAKDGQTAMSVHVLQGERELVEDCRSLGRFTLRGIPPMVAGAATIRVTYQVDADGLLSVTAMEKSTKVQASIQIKPSYGLTDEEVTQMIKSSMTNAKEDMEARQLAEQRVEADRTIDTVISALQQDGAEVLSVEEFKLIEAEIAKLIQLKQGTDRQAIAQGVKDLDLATQTFAAKRMNLSIQKALAGKAVDEII.

It belongs to the heat shock protein 70 family.

Functionally, chaperone involved in the maturation of iron-sulfur cluster-containing proteins. Has a low intrinsic ATPase activity which is markedly stimulated by HscB. This Actinobacillus pleuropneumoniae serotype 5b (strain L20) protein is Chaperone protein HscA homolog.